A 63-amino-acid chain; its full sequence is Large ribosomal subunit protein bL35 (63 aa).

Belongs to the bacterial ribosomal protein bL35 family.

In Sulfurovum sp. (strain NBC37-1), this protein is Large ribosomal subunit protein bL35.